Reading from the N-terminus, the 970-residue chain is Type III restriction-modification enzyme EcoPI Res subunit (970 aa).

Residues 75-540 (ARSNVIDVSM…EVGRGLRLPV (466 aa)) form a helicase-like domain region. The tract at residues 894 to 918 (TYSPDFAYVVKTAEGDYLNFIIETK) is endonuclease domain.

It belongs to the type III restriction-modification system Res protein family. A heterotetramer with stoichiometry Res(2)Mod(2). Requires Mg(2+) as cofactor. S-adenosyl-L-methionine serves as cofactor.

The enzyme catalyses Endonucleolytic cleavage of DNA to give specific double-stranded fragments with terminal 5'-phosphates.. Functionally, a type III restriction enzyme that recognizes 2 inversely oriented double-stranded sequences 5'-AGACC-3' and cleaves DNA 25-27 base pairs downstream of one site, producing a single-strand 5' protrusion of two nucleotides. DNA restriction requires both the Res and Mod subunits. DNA topology affects its action; relaxed and negatively supercoiled DNA are digested but positively supercoiled DNA is not a good substrate. After binding to one recognition site undergoes random one-dimensional diffusion along DNA until it collides with a stationary enzyme bound to the second DNA site, which is when DNA cleavage occurs. The sequence is that of Type III restriction-modification enzyme EcoPI Res subunit from Enterobacteriaceae (Bacteriophage P1).